The primary structure comprises 348 residues: Growth-regulating factor 5 (348 aa).

The QLQ domain occupies Val-24–Pro-59. 2 consecutive short sequence motifs (bipartite nuclear localization signal) follow at residues Lys-94 to Arg-112 and Arg-130 to Lys-137. Positions Asp-97 to Ser-141 constitute a WRC domain. 2 disordered regions span residues Glu-125–Asp-165 and Leu-306–Asp-348. Residues His-127 to Arg-136 are compositionally biased toward basic residues. The segment covering Pro-148–Thr-161 has biased composition (polar residues). Residues Leu-306–Trp-320 show a composition bias toward basic and acidic residues. The segment covering Asn-329 to Ile-340 has biased composition (polar residues).

The protein belongs to the GRF family.

It localises to the nucleus. Transcription activator that plays a regulatory role in gibberellin-induced stem elongation. The sequence is that of Growth-regulating factor 5 (GRF5) from Oryza sativa subsp. japonica (Rice).